Reading from the N-terminus, the 479-residue chain is uncharacterized protein (479 aa).

8 helical membrane-spanning segments follow: residues 25 to 45 (VVFVAIMGYLLFKNLLFLFFF), 63 to 83 (IAMIIAVAVSIVLVLMALAGG), 110 to 130 (LFGPIVGIFSAATIDFLTVIF), 133 to 153 (GVFNVGYVLGAILTGMIAGIL), 175 to 195 (VLSIGMVIAAFLITQFFVLGI), 229 to 249 (ILLYFTIAIVIAMLVLYIVWL), 287 to 307 (LILNVITLASTSLLMINIAFI), and 328 to 348 (LFAPVIFLLDIIVIYPILLLL).

It in the C-terminal section; belongs to the GatC family.

It is found in the cell membrane. This is an uncharacterized protein from Mycoplasma pneumoniae (strain ATCC 29342 / M129 / Subtype 1) (Mycoplasmoides pneumoniae).